The sequence spans 229 residues: Wtf element wtf14 (229 aa).

Residues 1–26 (MENNHHLAKDSLDELNPKRGKGEHET) show a composition bias toward basic and acidic residues. Positions 1-27 (MENNHHLAKDSLDELNPKRGKGEHETQ) are disordered. The next 4 membrane-spanning stretches (helical) occupy residues 71–91 (IPAV…YLVF), 100–120 (VLFG…LLAT), 151–171 (LYAI…LMFF), and 188–208 (VIGV…PGLF).

The protein belongs to the WTF family.

The protein localises to the endoplasmic reticulum membrane. May act in meiotic drive. The sequence is that of Wtf element wtf14 from Schizosaccharomyces pombe (strain 972 / ATCC 24843) (Fission yeast).